Reading from the N-terminus, the 899-residue chain is Bifunctional uridylyltransferase/uridylyl-removing enzyme (899 aa).

Residues 1–347 are uridylyltransferase; the sequence is MFISDPTDSL…PESERPEKSV (347 aa). The tract at residues 348 to 718 is uridylyl-removing; that stretch reads LNARFNRVGD…EHRELALDAV (371 aa). Residues 465–581 enclose the HD domain; sequence VDAHILLLIR…TKFANLVGNV (117 aa). ACT domains lie at 719–804 and 827–899; these read QIFI…RLPR and VMSL…TPSC.

This sequence belongs to the GlnD family. It depends on Mg(2+) as a cofactor.

It carries out the reaction [protein-PII]-L-tyrosine + UTP = [protein-PII]-uridylyl-L-tyrosine + diphosphate. It catalyses the reaction [protein-PII]-uridylyl-L-tyrosine + H2O = [protein-PII]-L-tyrosine + UMP + H(+). With respect to regulation, uridylyltransferase (UTase) activity is inhibited by glutamine, while glutamine activates uridylyl-removing (UR) activity. Modifies, by uridylylation and deuridylylation, the PII regulatory proteins (GlnB and homologs), in response to the nitrogen status of the cell that GlnD senses through the glutamine level. Under low glutamine levels, catalyzes the conversion of the PII proteins and UTP to PII-UMP and PPi, while under higher glutamine levels, GlnD hydrolyzes PII-UMP to PII and UMP (deuridylylation). Thus, controls uridylylation state and activity of the PII proteins, and plays an important role in the regulation of nitrogen assimilation and metabolism. The polypeptide is Bifunctional uridylyltransferase/uridylyl-removing enzyme (Psychrobacter sp. (strain PRwf-1)).